Reading from the N-terminus, the 393-residue chain is Probable acetyl-CoA acyltransferase (393 aa).

The Acyl-thioester intermediate role is filled by Cys-88. Residues His-349 and Cys-378 each act as proton acceptor in the active site.

This sequence belongs to the thiolase-like superfamily. Thiolase family.

It is found in the cytoplasm. It catalyses the reaction 2 acetyl-CoA = acetoacetyl-CoA + CoA. The chain is Probable acetyl-CoA acyltransferase from Staphylococcus aureus (strain COL).